Here is a 331-residue protein sequence, read N- to C-terminus: MLSPERLALPDYEYLAQRHVLTYMEDAVCQLLENREDISQYGIARFFTDYFNSVCQGTHILFREFSFIQATPHNRASFLRAFWRCFRTVGKNGDLLTMREYHCLLQLLCPDFPLELTQKAARIVLMDDAMDCLMSFSDFLFAFQIQFYYSEFLESVAAIYQDLLSGKNPNTVIVPTSSSGQHRQRPALGDAGMLDGVEASLFYQRLENLCDRHKYSCPPPALVKEILSNVQRLTFYGFLVALSKHHGINQALGALPDKGDLMHDPAMDEELERLLVQVPGLVNSITATSEASCLPSRTPPRVGSPWKPLHRSRKLDAESDGSTEETDESET.

The required for interaction with PCM1 stretch occupies residues 1-111 (MLSPERLALP…HCLLQLLCPD (111 aa)). Residues 1–225 (MLSPERLALP…SCPPPALVKE (225 aa)) form a required for interaction with TPGS1, LRRC49, and TTLL1 region. The required for interaction with TPGS2 stretch occupies residues 112–331 (FPLELTQKAA…STEETDESET (220 aa)). Residues 292-331 (SCLPSRTPPRVGSPWKPLHRSRKLDAESDGSTEETDESET) are disordered. Acidic residues predominate over residues 318–331 (ESDGSTEETDESET). Ser-319 is modified (phosphoserine).

This sequence belongs to the CSTPP1 family. As to quaternary structure, interacts with PCM1. Interacts with TTLL1, TPGS1, TPGS2 and LRRC49; the interactions link CSTPP1 to the complex TPGC. Binds to alpha-tubulin.

The protein localises to the cytoplasm. It localises to the cytoskeleton. Its subcellular location is the microtubule organizing center. The protein resides in the centrosome. It is found in the centriolar satellite. Its function is as follows. Regulator of the tubulin polyglutamylase complex (TPGC) that controls cytoskeletal organization, nuclear shape, and cilium disassembly by balancing microtubule and actin assembly. Regulates the assembly and stability of the TPGC and thereby modulates polyglutamylation of the microtubule, which antagonizes MAP4 binding. The chain is Centriolar satellite-associated tubulin polyglutamylase complex regulator 1 from Mus musculus (Mouse).